The primary structure comprises 187 residues: 1,6-anhydro-N-acetylmuramyl-L-alanine amidase AmpD (187 aa).

Residues 29–167 (SLLVVHNISL…APDRKTDPGP (139 aa)) enclose the N-acetylmuramoyl-L-alanine amidase domain. His-34 contributes to the Zn(2+) binding site. The active-site Proton acceptor is Glu-116. Positions 154 and 164 each coordinate Zn(2+).

It belongs to the N-acetylmuramoyl-L-alanine amidase 2 family. Zn(2+) is required as a cofactor.

It localises to the cytoplasm. The enzyme catalyses Hydrolyzes the link between N-acetylmuramoyl residues and L-amino acid residues in certain cell-wall glycopeptides.. In terms of biological role, involved in cell wall peptidoglycan recycling. Specifically cleaves the amide bond between the lactyl group of N-acetylmuramic acid and the alpha-amino group of the L-alanine in degradation products containing an anhydro N-acetylmuramyl moiety. This is 1,6-anhydro-N-acetylmuramyl-L-alanine amidase AmpD (ampD) from Salmonella typhimurium (strain SL1344).